Consider the following 112-residue polypeptide: Nitrogenase-stabilizing/protective protein NifW (112 aa).

It belongs to the NifW family. Homotrimer; associates with NifD.

In terms of biological role, may protect the nitrogenase Fe-Mo protein from oxidative damage. The polypeptide is Nitrogenase-stabilizing/protective protein NifW (Rhodopseudomonas palustris (strain BisA53)).